The following is a 251-amino-acid chain: Triosephosphate isomerase (251 aa).

9 to 11 is a substrate binding site; sequence NWK. Histidine 95 (electrophile) is an active-site residue. The active-site Proton acceptor is glutamate 167. Substrate is bound by residues glycine 173, serine 213, and 234 to 235; that span reads GG.

It belongs to the triosephosphate isomerase family. As to quaternary structure, homodimer.

It is found in the cytoplasm. The catalysed reaction is D-glyceraldehyde 3-phosphate = dihydroxyacetone phosphate. The protein operates within carbohydrate biosynthesis; gluconeogenesis. It functions in the pathway carbohydrate degradation; glycolysis; D-glyceraldehyde 3-phosphate from glycerone phosphate: step 1/1. Functionally, involved in the gluconeogenesis. Catalyzes stereospecifically the conversion of dihydroxyacetone phosphate (DHAP) to D-glyceraldehyde-3-phosphate (G3P). The chain is Triosephosphate isomerase from Pediococcus pentosaceus (strain ATCC 25745 / CCUG 21536 / LMG 10740 / 183-1w).